A 132-amino-acid polypeptide reads, in one-letter code: Small ribosomal subunit protein uS8 (132 aa).

Belongs to the universal ribosomal protein uS8 family. As to quaternary structure, part of the 30S ribosomal subunit. Contacts proteins S5 and S12.

One of the primary rRNA binding proteins, it binds directly to 16S rRNA central domain where it helps coordinate assembly of the platform of the 30S subunit. This Rhizobium johnstonii (strain DSM 114642 / LMG 32736 / 3841) (Rhizobium leguminosarum bv. viciae) protein is Small ribosomal subunit protein uS8.